Here is a 295-residue protein sequence, read N- to C-terminus: 4-hydroxy-tetrahydrodipicolinate synthase (295 aa).

Threonine 47 contributes to the pyruvate binding site. Residue tyrosine 135 is the Proton donor/acceptor of the active site. The active-site Schiff-base intermediate with substrate is the lysine 163. Pyruvate is bound at residue isoleucine 206.

The protein belongs to the DapA family. In terms of assembly, homodimer.

The protein localises to the cytoplasm. The catalysed reaction is L-aspartate 4-semialdehyde + pyruvate = (2S,4S)-4-hydroxy-2,3,4,5-tetrahydrodipicolinate + H2O + H(+). Its pathway is amino-acid biosynthesis; L-lysine biosynthesis via DAP pathway; (S)-tetrahydrodipicolinate from L-aspartate: step 3/4. Its function is as follows. Catalyzes the condensation of (S)-aspartate-beta-semialdehyde [(S)-ASA] and pyruvate to 4-hydroxy-tetrahydrodipicolinate (HTPA). This chain is 4-hydroxy-tetrahydrodipicolinate synthase, found in Staphylococcus aureus (strain Mu50 / ATCC 700699).